Reading from the N-terminus, the 647-residue chain is DNA mismatch repair protein MutL (647 aa).

The protein belongs to the DNA mismatch repair MutL/HexB family.

Functionally, this protein is involved in the repair of mismatches in DNA. It is required for dam-dependent methyl-directed DNA mismatch repair. May act as a 'molecular matchmaker', a protein that promotes the formation of a stable complex between two or more DNA-binding proteins in an ATP-dependent manner without itself being part of a final effector complex. This chain is DNA mismatch repair protein MutL, found in Bacillus cereus (strain ATCC 10987 / NRS 248).